The primary structure comprises 576 residues: Sulfite reductase [NADPH] hemoprotein beta-component (576 aa).

4 residues coordinate [4Fe-4S] cluster: cysteine 434, cysteine 440, cysteine 479, and cysteine 483. Cysteine 483 lines the siroheme pocket.

Belongs to the nitrite and sulfite reductase 4Fe-4S domain family. In terms of assembly, alpha(8)-beta(8). The alpha component is a flavoprotein, the beta component is a hemoprotein. Requires siroheme as cofactor. The cofactor is [4Fe-4S] cluster.

It carries out the reaction hydrogen sulfide + 3 NADP(+) + 3 H2O = sulfite + 3 NADPH + 4 H(+). It functions in the pathway sulfur metabolism; hydrogen sulfide biosynthesis; hydrogen sulfide from sulfite (NADPH route): step 1/1. Functionally, component of the sulfite reductase complex that catalyzes the 6-electron reduction of sulfite to sulfide. This is one of several activities required for the biosynthesis of L-cysteine from sulfate. The protein is Sulfite reductase [NADPH] hemoprotein beta-component of Oceanobacillus iheyensis (strain DSM 14371 / CIP 107618 / JCM 11309 / KCTC 3954 / HTE831).